The following is a 1205-amino-acid chain: Nitric oxide synthase 3 (1205 aa).

Disordered stretches follow at residues 1–20 and 26–73; these read MGNLKSVGQEPGPPCGLGLG and CGKQ…FPRV. Residues 33 to 47 are compositionally biased toward pro residues; that stretch reads SPAPEPSWAPAPATP. Residues Cys-96 and Cys-101 each coordinate Zn(2+). Residues 100–489 are interaction with NOSIP; the sequence is RCLGSLVLPR…PDPWKGSAAK (390 aa). Ser-104 is a binding site for (6R)-L-erythro-5,6,7,8-tetrahydrobiopterin. Residue Ser-116 is modified to Phosphoserine. Position 186 (Cys-186) interacts with heme b. L-arginine-binding residues include Gln-250, Trp-359, Tyr-360, and Glu-364. Arg-368 is a binding site for (6R)-L-erythro-5,6,7,8-tetrahydrobiopterin. Asn-369 serves as a coordination point for L-arginine. (6R)-L-erythro-5,6,7,8-tetrahydrobiopterin is bound by residues Ala-449, Trp-450, and Phe-463. Tyr-478 is a binding site for heme b. Position 498 is a phosphothreonine (Thr-498). FMN is bound by residues Ser-529, Glu-530, Thr-531, Arg-533, Ser-575, and Thr-576. Phosphoserine occurs at positions 618, 636, and 641. 4 residues coordinate FMN: Ser-657, Cys-664, Glu-690, and Gln-694. Arg-781 provides a ligand contact to NADP(+). Residues 796-850 are disordered; it reads LQYQPGDHISPHPPPRSSHRPGQGGPRVAPFSERPLMPRTPPPGGPPPSWVRDPR. Residue His-803 coordinates FAD. The span at 833 to 844 shows a compositional bias: pro residues; the sequence is PRTPPPGGPPPS. FAD-binding residues include Arg-939, Tyr-941, Ser-942, Thr-957, and Ala-959. Residues Thr-1018, Arg-1051, Ser-1080, Arg-1081, Lys-1087, Tyr-1089, and Gln-1091 each contribute to the NADP(+) site. Thr-1177 is subject to Phosphothreonine. 2 positions are modified to phosphoserine: Ser-1179 and Ser-1181.

This sequence belongs to the NOS family. In terms of assembly, homodimer. Interacts with NOSIP and NOSTRIN. Interacts with HSP90AB1. Forms a complex with ASL, ASS1 and SLC7A1; the complex regulates cell-autonomous L-arginine synthesis and citrulline recycling while channeling extracellular L-arginine to nitric oxide synthesis pathway. Heme b serves as cofactor. Requires FAD as cofactor. It depends on FMN as a cofactor. The cofactor is (6R)-L-erythro-5,6,7,8-tetrahydrobiopterin.

The protein localises to the membrane. Its subcellular location is the caveola. The protein resides in the cytoplasm. It is found in the cytoskeleton. It localises to the golgi apparatus. The protein localises to the cell membrane. The enzyme catalyses 2 L-arginine + 3 NADPH + 4 O2 + H(+) = 2 L-citrulline + 2 nitric oxide + 3 NADP(+) + 4 H2O. Stimulated by calcium/calmodulin. Inhibited by NOSIP and NOSTRIN. In terms of biological role, produces nitric oxide (NO) which is implicated in vascular smooth muscle relaxation through a cGMP-mediated signal transduction pathway. NO mediates vascular endothelial growth factor (VEGF)-induced angiogenesis in coronary vessels and promotes blood clotting through the activation of platelets. This chain is Nitric oxide synthase 3 (NOS3), found in Ovis aries (Sheep).